A 326-amino-acid polypeptide reads, in one-letter code: Chitinase 12 (326 aa).

Positions 1–21 (MRALAVVAMVATAFLAAAVHA) are cleaved as a signal peptide. A Chitin-binding type-1 domain is found at 22 to 62 (EQCGSQAGGAVCPNCLCCSQFGWCGSTSDYCGAGCQSQCSA). Disulfide bonds link Cys-24–Cys-39, Cys-33–Cys-45, Cys-36–Cys-65, Cys-38–Cys-52, Cys-56–Cys-60, Cys-102–Cys-165, Cys-179–Cys-187, and Cys-286–Cys-318. Glu-147 serves as the catalytic Proton donor.

This sequence belongs to the glycosyl hydrolase 19 family. Chitinase class I subfamily. Expressed in meristems and at lower levels in roots and sheaths.

The enzyme catalyses Random endo-hydrolysis of N-acetyl-beta-D-glucosaminide (1-&gt;4)-beta-linkages in chitin and chitodextrins.. Its function is as follows. Hydrolyzes chitin and plays a role in defense against fungal pathogens containing chitin. Its overexpression confers enhanced resistance to sheath blight pathogen (R.solani). This chain is Chitinase 12 (Cht12), found in Oryza sativa subsp. japonica (Rice).